A 186-amino-acid polypeptide reads, in one-letter code: MSVADTKKGVEQKMQRSIDAFKSDLAKIRTGRAHTGMLDHVQVDYYGSMVPISQVANMTLVDARTIGVQPWEKPMVAKVEKAIREADLGLNPATSGDQIRVPMPALTEERRRELTKVVKSEGETAKVAIRNLRRDANEALKKLVKDKEISEDDERRASDDVQKLTDKHVAEIDKLVQSKEAEIMTV.

This sequence belongs to the RRF family.

The protein localises to the cytoplasm. Its function is as follows. Responsible for the release of ribosomes from messenger RNA at the termination of protein biosynthesis. May increase the efficiency of translation by recycling ribosomes from one round of translation to another. This is Ribosome-recycling factor from Burkholderia lata (strain ATCC 17760 / DSM 23089 / LMG 22485 / NCIMB 9086 / R18194 / 383).